The primary structure comprises 194 residues: Protein phosphatase 1 regulatory subunit 1B (194 aa).

The residue at position 1 (Met-1) is an N-acetylmethionine. The interval 1 to 194 is disordered; that stretch reads MDPKDRKKIQ…GEEPQHPSPP (194 aa). Thr-34 carries the phosphothreonine; by PKA modification. Basic and acidic residues predominate over residues 41-63; it reads VSEHSSPEEEASPHQRTSGEGHH. Phosphoserine is present on residues Ser-45 and Ser-46. Thr-75 bears the Phosphothreonine mark. Over residues 84–95 the composition is skewed to polar residues; it reads HLQTISNLSENQ. Phosphoserine occurs at positions 97 and 130. Positions 113 to 131 are enriched in acidic residues; it reads QEDDEEDEDEEEDEEEDSQ. The span at 160-170 shows a compositional bias: basic and acidic residues; it reads PPLDEPQRDGN. Ser-192 is subject to Phosphoserine.

This sequence belongs to the protein phosphatase inhibitor 1 family. Post-translationally, dopamine- and cyclic AMP-regulated neuronal phosphoprotein. In terms of processing, phosphorylation of Thr-34 is required for activity.

The protein localises to the cytoplasm. Inhibitor of protein-phosphatase 1. In Mus musculus (Mouse), this protein is Protein phosphatase 1 regulatory subunit 1B (Ppp1r1b).